The following is a 1154-amino-acid chain: Voltage-dependent calcium channel subunit alpha-2/delta-2 (1154 aa).

A signal peptide spans 1-18 (MAVPARTCGASWPGPVRT). A disordered region spans residues 1–37 (MAVPARTCGASWPGPVRTARPWPGRGPRPCPDPRGPA). Residues 19 to 1116 (ARPWPGRGPR…TEDTSDCGRG (1098 aa)) are Extracellular-facing. Positions 24-34 (GRGPRPCPDPR) are enriched in pro residues. The N-linked (GlcNAc...) asparagine glycan is linked to asparagine 205. One can recognise a VWFA domain in the interval 294 to 472 (DMVIIVDVSG…INTQEYLDVL (179 aa)). Positions 300, 302, and 304 each coordinate a divalent metal cation. An MIDAS-like motif motif is present at residues 300 to 304 (DVSGS). N-linked (GlcNAc...) asparagine glycans are attached at residues asparagine 389, asparagine 421, asparagine 510, asparagine 543, asparagine 627, and asparagine 864. Residues cysteine 446 and cysteine 1101 are joined by a disulfide bond. Residues 488 to 577 (WTNVYEDALG…KPQTTNFREP (90 aa)) enclose the Cache domain. The helical transmembrane segment at 1117 to 1137 (ASFPPSLGVLVSLQLLLLLGL) threads the bilayer. The Cytoplasmic portion of the chain corresponds to 1138-1154 (PPRPQPQVHSFAASRHL).

The protein belongs to the calcium channel subunit alpha-2/delta family. As to quaternary structure, dimer formed of alpha-2-2 and delta-2 chains; disulfide-linked. Voltage-dependent calcium channels are multisubunit complexes, consisting of alpha-1 (CACNA1), alpha-2 (CACNA2D), beta (CACNB) and delta (CACNA2D) subunits in a 1:1:1:1 ratio. In terms of processing, N-glycosylated. Post-translationally, may be proteolytically processed into subunits alpha-2-2 and delta-2 that are disulfide-linked. It is however unclear whether such cleavage really takes place in vivo and has a functional role. According to PubMed:11306709, it is processed, at least in vitro, while according to PubMed:17052222, it is only poorly processed in vivo. Predominantly expressed in brain in a restricted pattern. Also expressed at lower level in kidney and testis Not expressed in lung at any moment of development. In brain, it localizes to sections of P21 brain. Expressed at high level in the cerebellum, with moderate levels in medulla, pons, and striatum. Also expressed in cortex, hippocampus, habenula and nucleus reticularis thalami (nRT). Strongly expressed in cerebellar Purkinje cells.

It localises to the membrane. The alpha-2/delta subunit of voltage-dependent calcium channels regulates calcium current density and activation/inactivation kinetics of the calcium channel. Acts as a regulatory subunit for P/Q-type calcium channel (CACNA1A), N-type (CACNA1B), L-type (CACNA1C OR CACNA1D) and possibly T-type (CACNA1G). In Mus musculus (Mouse), this protein is Voltage-dependent calcium channel subunit alpha-2/delta-2 (Cacna2d2).